We begin with the raw amino-acid sequence, 165 residues long: MSLSKNSHKEDQLEEKVLVVNRCSKVVKGGRKFSFSALILVGDGKGRLGYGFAKANELTDAIRKGGEAAKKNLMKIEALEDGSIPHEVLVHHDGAQLLLKPAKPGTGIVAGSRIRLILEMAGIKDIVAKSFGSNNPMNQVKAAFKALTGLSPRKDLLRRGAAIND.

The S5 DRBM domain occupies 13 to 76; it reads LEEKVLVVNR…EAAKKNLMKI (64 aa).

This sequence belongs to the universal ribosomal protein uS5 family. As to quaternary structure, part of the 30S ribosomal subunit. Contacts proteins S4 and S8.

Its function is as follows. With S4 and S12 plays an important role in translational accuracy. Functionally, located at the back of the 30S subunit body where it stabilizes the conformation of the head with respect to the body. The protein is Small ribosomal subunit protein uS5 of Chlamydia pneumoniae (Chlamydophila pneumoniae).